A 663-amino-acid chain; its full sequence is Alcohol oxidase (663 aa).

8–39 (DVIVCGGGSTGCVIAGRLANVDENLKVLLIEN) serves as a coordination point for FAD. Residue His567 is the Proton acceptor of the active site. The Microbody targeting signal signature appears at 661 to 663 (ARY).

It belongs to the GMC oxidoreductase family. As to quaternary structure, homooctamer. Requires FAD as cofactor.

The protein resides in the peroxisome matrix. It carries out the reaction a primary alcohol + O2 = an aldehyde + H2O2. Its pathway is energy metabolism; methane degradation. Functionally, catalyzes the oxidation of methanol to formaldehyde and hydrogen peroxide, the first step in the methanol utilization pathway of methylotrophic yeasts. This chain is Alcohol oxidase (AOD1), found in Candida boidinii (Yeast).